Consider the following 421-residue polypeptide: Serine--tRNA ligase (421 aa).

L-serine is bound at residue 229–231 (TAE). ATP is bound at residue 260 to 262 (RAE). Residue glutamate 283 coordinates L-serine. Position 347 to 350 (347 to 350 (EISS)) interacts with ATP. An L-serine-binding site is contributed by serine 383.

It belongs to the class-II aminoacyl-tRNA synthetase family. Type-1 seryl-tRNA synthetase subfamily. As to quaternary structure, homodimer. The tRNA molecule binds across the dimer.

Its subcellular location is the cytoplasm. The enzyme catalyses tRNA(Ser) + L-serine + ATP = L-seryl-tRNA(Ser) + AMP + diphosphate + H(+). It carries out the reaction tRNA(Sec) + L-serine + ATP = L-seryl-tRNA(Sec) + AMP + diphosphate + H(+). Its pathway is aminoacyl-tRNA biosynthesis; selenocysteinyl-tRNA(Sec) biosynthesis; L-seryl-tRNA(Sec) from L-serine and tRNA(Sec): step 1/1. In terms of biological role, catalyzes the attachment of serine to tRNA(Ser). Is also able to aminoacylate tRNA(Sec) with serine, to form the misacylated tRNA L-seryl-tRNA(Sec), which will be further converted into selenocysteinyl-tRNA(Sec). This Desulfitobacterium hafniense (strain Y51) protein is Serine--tRNA ligase.